The primary structure comprises 273 residues: 4-hydroxy-tetrahydrodipicolinate reductase (273 aa).

NAD(+) contacts are provided by residues 8-13 (GCAGNM), Glu-34, 102-104 (GTT), and 128-131 (SPNM). His-161 (proton donor/acceptor) is an active-site residue. His-162 serves as a coordination point for (S)-2,3,4,5-tetrahydrodipicolinate. The active-site Proton donor is Lys-165. 171 to 172 (GT) is a binding site for (S)-2,3,4,5-tetrahydrodipicolinate.

Belongs to the DapB family.

It localises to the cytoplasm. The enzyme catalyses (S)-2,3,4,5-tetrahydrodipicolinate + NAD(+) + H2O = (2S,4S)-4-hydroxy-2,3,4,5-tetrahydrodipicolinate + NADH + H(+). It carries out the reaction (S)-2,3,4,5-tetrahydrodipicolinate + NADP(+) + H2O = (2S,4S)-4-hydroxy-2,3,4,5-tetrahydrodipicolinate + NADPH + H(+). Its pathway is amino-acid biosynthesis; L-lysine biosynthesis via DAP pathway; (S)-tetrahydrodipicolinate from L-aspartate: step 4/4. In terms of biological role, catalyzes the conversion of 4-hydroxy-tetrahydrodipicolinate (HTPA) to tetrahydrodipicolinate. This is 4-hydroxy-tetrahydrodipicolinate reductase from Methanosphaera stadtmanae (strain ATCC 43021 / DSM 3091 / JCM 11832 / MCB-3).